The primary structure comprises 565 residues: Deformed epidermal autoregulatory factor 1 homolog (565 aa).

Disordered stretches follow at residues 34–62 (GGEA…ETPR) and 162–190 (GLKG…KGGT). A compositionally biased stretch (pro residues) spans 169–181 (PLTPGPQSPPTPL). Residue Thr-171 is modified to Phosphothreonine. Phosphoserine is present on Ser-176. The residue at position 179 (Thr-179) is a Phosphothreonine. One can recognise an SAND domain in the interval 193 to 273 (NWDPSVYDSE…QCLIQDGILN (81 aa)). A Nuclear localization signal motif is present at residues 301-316 (KRRKKENELPTTPVKK). The interaction with LMO4 stretch occupies residues 403–478 (IAPFPEAALP…QLKTLFEQAK (76 aa)). A Phosphothreonine modification is found at Thr-432. Ser-448 is subject to Phosphoserine. The Zn(2+) site is built by Cys-504, Cys-507, Cys-515, Cys-518, Cys-524, Cys-528, His-536, and Cys-540. The MYND-type zinc finger occupies 504–540 (CVNCGREAMSECTGCHKVNYCSTFCQRKDWKDHQHIC).

In terms of assembly, homodimer. Isoform 1 and isoform 4 may form a heterodimer. Interacts with LMO2 and CLIM2. Interacts with LMO4; LMO4 blocks export from nucleus. May interact with the corepressors NCOR1 and NCRO2. Identified in a complex with the XRCC5 and XRCC6 heterodimer. Interacts (via the SAND domain) with the DNA-PK complex subunit XRCC6; the interaction is direct and may be inhibited by DNA-binding. Post-translationally, may be phosphorylated by DNA-PK complex in a DNA independent manner (in vitro). Expressed in various tissues and cells such as in peripheral mononuclear cells and hormone-secreting pituitary cells. Expression in pancreatic lymph nodes of patients with type 1 diabetes is 20 times higher than in healthy controls. Highly expressed in fetal and adult brain.

It is found in the nucleus. It localises to the cytoplasm. The protein resides in the secreted. Transcription factor that binds to sequence with multiple copies of 5'-TTC[CG]G-3' present in its own promoter and that of the HNRPA2B1 gene. Down-regulates transcription of these genes. Binds to the retinoic acid response element (RARE) 5'-AGGGTTCACCGAAAGTTCA-3'. Activates the proenkephalin gene independently of promoter binding, probably through protein-protein interaction. When secreted, behaves as an inhibitor of cell proliferation, by arresting cells in the G0 or G1 phase. Required for neural tube closure and skeletal patterning. Regulates epithelial cell proliferation and side-branching in the mammary gland. Controls the expression of peripheral tissue antigens in pancreatic lymph nodes. Isoform 1 displays greater transcriptional activity than isoform 4. Isoform 4 may inhibit transcriptional activity of isoform 1 by interacting with isoform 1 and retaining it in the cytoplasm. Transcriptional activator of EIF4G3. The chain is Deformed epidermal autoregulatory factor 1 homolog (DEAF1) from Homo sapiens (Human).